The following is a 230-amino-acid chain: Ion-translocating oxidoreductase complex subunit E (230 aa).

6 helical membrane-spanning segments follow: residues 18–38 (ALVQLLGLCPLLAVTSTATNA), 39–59 (LGLGLATTLVLTLTNLTVSAL), 63–83 (TPAEIRIPIYVMIIASVVSAV), 86–106 (LINAYAFGLYQSLGIFIPLIV), 125–145 (WLSALDGFSIGMGATGAMFVL), and 182–202 (PFLLARLPPGAFIGLGLMLAV).

Belongs to the NqrDE/RnfAE family. The complex is composed of six subunits: RsxA, RsxB, RsxC, RsxD, RsxE and RsxG.

It is found in the cell inner membrane. Functionally, part of a membrane-bound complex that couples electron transfer with translocation of ions across the membrane. Required to maintain the reduced state of SoxR. This chain is Ion-translocating oxidoreductase complex subunit E, found in Salmonella dublin (strain CT_02021853).